The following is a 152-amino-acid chain: MSKRVQIVLNKTINKLGQTGDLVEVAPGYARNYLIPQGMGVIATPGILRQVEQRKEKEMQRLLAEKQAAEARKVALSTIGRFTIRKQVGEGEAIFGTVTTQEVADAIQAATNQEVDRRGITLPEISQTGFYKATVKLHPEVTAEIEIQVAPL.

Belongs to the bacterial ribosomal protein bL9 family.

Its function is as follows. Binds to the 23S rRNA. This is Large ribosomal subunit protein bL9 from Rippkaea orientalis (strain PCC 8801 / RF-1) (Cyanothece sp. (strain PCC 8801)).